We begin with the raw amino-acid sequence, 337 residues long: Anthranilate phosphoribosyltransferase (337 aa).

5-phospho-alpha-D-ribose 1-diphosphate contacts are provided by residues G80, 83 to 84 (GD), T88, 90 to 93 (NIST), 108 to 116 (KHGNRAVSS), and S120. G80 is a binding site for anthranilate. A Mg(2+)-binding site is contributed by S92. Position 111 (N111) interacts with anthranilate. R166 provides a ligand contact to anthranilate. 2 residues coordinate Mg(2+): D224 and E225.

It belongs to the anthranilate phosphoribosyltransferase family. As to quaternary structure, homodimer. The cofactor is Mg(2+).

It carries out the reaction N-(5-phospho-beta-D-ribosyl)anthranilate + diphosphate = 5-phospho-alpha-D-ribose 1-diphosphate + anthranilate. It participates in amino-acid biosynthesis; L-tryptophan biosynthesis; L-tryptophan from chorismate: step 2/5. In terms of biological role, catalyzes the transfer of the phosphoribosyl group of 5-phosphorylribose-1-pyrophosphate (PRPP) to anthranilate to yield N-(5'-phosphoribosyl)-anthranilate (PRA). The sequence is that of Anthranilate phosphoribosyltransferase from Anaeromyxobacter sp. (strain Fw109-5).